The following is a 367-amino-acid chain: tRNA (cytosine(34)-C(5))-methyltransferase, mitochondrial (367 aa).

Residues 170-176 (CAAPGGK), glutamate 193, aspartate 224, and aspartate 242 contribute to the S-adenosyl-L-methionine site. Residue cysteine 296 is the Nucleophile of the active site.

It belongs to the class I-like SAM-binding methyltransferase superfamily. RsmB/NOP family.

The protein resides in the mitochondrion matrix. It carries out the reaction cytidine(34) in mitochondrial tRNA + S-adenosyl-L-methionine = 5-methylcytidine(34) in mitochondrial tRNA + S-adenosyl-L-homocysteine + H(+). Mitochondrial tRNA methyltransferase that mediates methylation of cytosine to 5-methylcytosine (m5C) at position 34 of mt-tRNA(Met). mt-tRNA(Met) methylation at cytosine(34) takes place at the wobble position of the anticodon and initiates the formation of 5-formylcytosine (f(5)c) at this position. mt-tRNA(Met) containing the f(5)c modification at the wobble position enables recognition of the AUA codon in addition to the AUG codon, expanding codon recognition in mitochondrial translation. The chain is tRNA (cytosine(34)-C(5))-methyltransferase, mitochondrial from Danio rerio (Zebrafish).